The chain runs to 215 residues: Chaperone protein TorD (215 aa).

This sequence belongs to the TorD/DmsD family. TorD subfamily.

It localises to the cytoplasm. Its function is as follows. Involved in the biogenesis of TorA. Acts on TorA before the insertion of the molybdenum cofactor and, as a result, probably favors a conformation of the apoenzyme that is competent for acquiring the cofactor. The polypeptide is Chaperone protein TorD (Vibrio parahaemolyticus serotype O3:K6 (strain RIMD 2210633)).